The chain runs to 1354 residues: MVILRYYDVQAHSAAEEESVLRRLREEDGAVVSVRMERCYHLEYSAQAEHSLALDELLVWLVKQPLSKGQSLSRQPALQSTGSSQLLLEIGPRFNFSTPYSTNCVNIFQNLGYSEVRRMETSTRYLVTFGEGSKAPEAARFVPLLGDRMTQCLYTEENTPKASFDEQLPERQANWHFVPVLEEGRAALERINQELGLAFNDYDLDYYHDLFAKELGRNPTTVELFDCAQSNSEHSRHWFFRGRMVIDGVEQPKSLIRMIMDTQAHTNPNNTIKFSDNSSAMVGFDHQTIVPSSVVAPGAVRLQSVQSDLIFTAETHNMPTAVAPFSGATTGTGGRLRDVQGVGRGGVPIAGTAGYCVGALHIPGYKQPYEPLDFKYPATFAPPLQVLIEASNGASDYGNKFGEPVISGFALSYGLNSAADASQRDEYVKPIMFSGGLGTMPATMREKLPPARGQLLAKIGGPVYRIGVGGGAASSVEIQGSGDAELDFNAVQRGDAEMENKLNRVVRACLDLGEQNPILAIHDQGAGGNGNVLKELVEPGFAGAVIFSKEFQLGDPTITALELWGAEYQENNAILCNADQRELLEKICRRERCPISFVGVVTGDGRVTLLEKPAPKDLEQALNASNRSEVSPFDLELKYVLGDMPKRTYDLKREQTPLKELSLPKGLLLDEALERVLSLVAVGSKRFLTNKVDRCVGGLIAQQQCVGPLQAPLADYALTTVSHFSHSGIATSIGTQPLKGLLDPAAMARMCVAEALSNLVFVKISELADVKCSGNWMWAAKLPGEGARMFDACKELCQILEELHIAIDGGKDSLSMAAKVGGETIKSPGTLVISTYAPCPDVRLKVTPDLKGPGAGSKTSLLWINLENSARLGGSALAQAYAQQGKDTPNLTRSDVLGKAFAVTQSLLGDGLIQAGHDVSDGGLLVCVLEMAIGGLSGLRVDLSEPLAKLKNFDKSVEKLNRPELAVLFAEECGWVVEVLDTDLERVRSTYEKAGVPNYYLGVTEGFGLDSRVVLKNGKSELLDQPLRVLYKKWERTSYELEKLQANPECAEAEYNSLEYRQAPQYRGPQNVQAELTLKRSSAPVRVAVLREEGVNSEREMMACLLRANFEVHDVTMSDLLQGTASVSQYRGLIFPGGFSYADTLGSAKGWAANILHNPRLLPQFEAFKRRQDVFSLGICNGCQLMTLIGFVGSAKSEVGADPDVALLHNKSQRFECRWATVKIPSNRSIMLGSMKDLVLGCWVAHGEGRFAFRDEKLISHLQSEQLVTLQYVDDVGKPTELYPLNPNGSPQGIAGLCSSDGRHLALMPHPERCSSMYQWPYVPSSFEVSPTQSESPWQIMFNNAYNWCVKSNQ.

Residues 327–338 (GATTGTGGRLRD), 407–409 (SGF), and A714 contribute to the ATP site. Mg(2+) contacts are provided by D715, E754, N758, and D918. S920 contributes to the ATP binding site. The Glutamine amidotransferase type-1 domain occupies 1087 to 1337 (VAVLREEGVN…EVSPTQSESP (251 aa)). Catalysis depends on C1180, which acts as the Nucleophile. Residues H1310 and E1312 contribute to the active site.

In the N-terminal section; belongs to the FGAMS family.

It carries out the reaction N(2)-formyl-N(1)-(5-phospho-beta-D-ribosyl)glycinamide + L-glutamine + ATP + H2O = 2-formamido-N(1)-(5-O-phospho-beta-D-ribosyl)acetamidine + L-glutamate + ADP + phosphate + H(+). It functions in the pathway purine metabolism; IMP biosynthesis via de novo pathway; 5-amino-1-(5-phospho-D-ribosyl)imidazole from N(2)-formyl-N(1)-(5-phospho-D-ribosyl)glycinamide: step 1/2. Its function is as follows. Phosphoribosylformylglycinamidine synthase involved in the purines biosynthetic pathway. Catalyzes the ATP-dependent conversion of formylglycinamide ribonucleotide (FGAR) and glutamine to yield formylglycinamidine ribonucleotide (FGAM) and glutamate. Because of its role in metabolisms, is involved in sleep regulation. The sequence is that of Phosphoribosylformylglycinamidine synthase from Drosophila melanogaster (Fruit fly).